Here is a 497-residue protein sequence, read N- to C-terminus: Tyrosine-protein kinase SPK-1 (497 aa).

A disordered region spans residues 1-25 (MGQKFSIKCKKQSKNKNTSKCQKIP). The SH3 domain occupies 33–94 (PGSYMVKAKY…PSNYVSKQDG (62 aa)). An SH2 domain is found at 100 to 200 (EAWREIQRWE…NTHIPLTDPM (101 aa)). The region spanning 220 to 482 (IEILNEIGRG…LVLQEKMDLL (263 aa)) is the Protein kinase domain. Residues 226–234 (IGRGFFGSV) and Lys-248 each bind ATP. Asp-342 serves as the catalytic Proton acceptor.

Belongs to the protein kinase superfamily. Tyr protein kinase family.

The catalysed reaction is L-tyrosyl-[protein] + ATP = O-phospho-L-tyrosyl-[protein] + ADP + H(+). In Girardia tigrina (Planarian), this protein is Tyrosine-protein kinase SPK-1.